A 1775-amino-acid polypeptide reads, in one-letter code: Protein TIC 214 (1775 aa).

The next 6 membrane-spanning stretches (helical) occupy residues 19 to 39, 68 to 88, 91 to 111, 133 to 153, 176 to 196, and 227 to 247; these read IINSVVVVGLYYGFLTTFSIG, FIAGQLMMFISIYYAPLHLAL, PHTITVLALPYLLFHFFWNNH, VFLNNLIFQLFNHFILPSSML, VGWLIGHILFMKWVGLVLVWI, and IFSILLFITCVYYLGRIPSPI. Residues 1491–1512 form a disordered region; sequence KESAGQGERESDNEKKKNLESA.

Belongs to the TIC214 family. Part of the Tic complex.

The protein resides in the plastid. It is found in the chloroplast inner membrane. Functionally, involved in protein precursor import into chloroplasts. May be part of an intermediate translocation complex acting as a protein-conducting channel at the inner envelope. This chain is Protein TIC 214, found in Lobularia maritima (Sweet alyssum).